Consider the following 94-residue polypeptide: Co-chaperonin GroES (94 aa).

This sequence belongs to the GroES chaperonin family. Heptamer of 7 subunits arranged in a ring. Interacts with the chaperonin GroEL.

It is found in the cytoplasm. Its function is as follows. Together with the chaperonin GroEL, plays an essential role in assisting protein folding. The GroEL-GroES system forms a nano-cage that allows encapsulation of the non-native substrate proteins and provides a physical environment optimized to promote and accelerate protein folding. GroES binds to the apical surface of the GroEL ring, thereby capping the opening of the GroEL channel. In Lactobacillus acidophilus (strain ATCC 700396 / NCK56 / N2 / NCFM), this protein is Co-chaperonin GroES.